The primary structure comprises 306 residues: Transcription factor MYBS1 (306 aa).

In terms of domain architecture, Myb-like spans W18 to V73. Positions L72–L86 match the Nuclear export signal 1 motif. The disordered stretch occupies residues Y89–I142. Low complexity predominate over residues E92–K109. 2 stretches are compositionally biased toward basic and acidic residues: residues D110–G120 and S132–I142. Residues K133–K140 carry the Nuclear localization signal 1 motif. The region spanning Q136–N192 is the HTH myb-type domain. The H-T-H motif DNA-binding region spans W164–F188. The Nuclear localization signal 2 signature appears at R196–R200. Residues I203–V215 carry the Nuclear export signal 2 motif. Positions A228–G241 are enriched in low complexity. A disordered region spans residues A228–P255.

In terms of assembly, homodimer. Interacts with GAMYB. In terms of tissue distribution, expressed in aboveground tissues, with the highest level in leaves.

It is found in the nucleus. The protein resides in the cytoplasm. Transcription activator that binds to 5'-TATCCA-3' elements in gene promoters. Derepresses strongly the sugar-repressed transcription of promoters containing SRS or 5'-TATCCA-3' elements. Functions with GAMYB to integrate diverse nutrient starvation and gibberellin (GA) signaling pathways during germination of grains. Sugar, nitrogen and phosphate starvation signals converge and interconnect with GA to promote the co-nuclear import of MYBS1 and GAMYB, resulting in the expression of a large set of GA-inducible hydrolases, transporters, and regulators that are essential for mobilization of nutrient reserves in the endosperm to support seedling growth. In Oryza sativa subsp. japonica (Rice), this protein is Transcription factor MYBS1.